Here is a 224-residue protein sequence, read N- to C-terminus: Glutathione S-transferase U28 (224 aa).

Positions 6–85 constitute a GST N-terminal domain; sequence SKVVVLDFWA…YIDETWTDAA (80 aa). Glutathione is bound by residues 16-17, 42-43, 56-57, and 69-70; these read SP, NK, KV, and ES. In terms of domain architecture, GST C-terminal spans 91-217; that stretch reads DPQSRATARF…EKVYQQVLKL (127 aa). Position 154 is a phosphothreonine (Thr-154).

The protein belongs to the GST superfamily. Tau family.

The protein localises to the cytoplasm. Its subcellular location is the cytosol. The catalysed reaction is RX + glutathione = an S-substituted glutathione + a halide anion + H(+). In terms of biological role, may be involved in the conjugation of reduced glutathione to a wide number of exogenous and endogenous hydrophobic electrophiles and have a detoxification role against certain herbicides. This Arabidopsis thaliana (Mouse-ear cress) protein is Glutathione S-transferase U28 (GSTU28).